A 555-amino-acid chain; its full sequence is Transmembrane protein 87B (555 aa).

The N-terminal stretch at 1–42 (MAAACRSEAGLLPSLLCRRPAGAQLLRVALCLLCWVPAAVDA) is a signal peptide. The Lumenal portion of the chain corresponds to 43 to 216 (VPELGLWTRT…HGYISASDWP (174 aa)). 3 N-linked (GlcNAc...) asparagine glycosylation sites follow: asparagine 68, asparagine 160, and asparagine 198. Residues 217–237 (LMIFYMVMCIVYILYGVLWLL) form a helical membrane-spanning segment. The Cytoplasmic portion of the chain corresponds to 238-248 (WSACYWKDILR). The helical transmembrane segment at 249–269 (IQFWIAAVIFLGMLEKAVFYS) threads the bilayer. The Lumenal segment spans residues 270 to 300 (EYQNINSTGLSTQGLLIFAELISAVKRTLAR). Asparagine 275 carries N-linked (GlcNAc...) asparagine glycosylation. The chain crosses the membrane as a helical span at residues 301–321 (LLVIIVSLGYGIVKPRLGTVM). At 322-323 (HR) the chain is on the cytoplasmic side. A helical membrane pass occupies residues 324–344 (VIGLGLLYLIFAAIEGVMRVI). The Lumenal portion of the chain corresponds to 345 to 351 (GGSKHLA). The helical transmembrane segment at 352-372 (VVLTDIVLAVIDSIFVWFIFI) threads the bilayer. Over 373–394 (SLAQTMKTLRLRKNTVKFSLYR) the chain is Cytoplasmic. Residues 395–415 (HFTNTLIFAVLASIVFMVWTT) form a helical membrane-spanning segment. Over 416-429 (KTFRIAKCQSDWME) the chain is Lumenal. A helical membrane pass occupies residues 430-450 (LWVDDAFWSFLFSVILIVIMF). The Cytoplasmic segment spans residues 451–555 (LWRPSANNQR…EKMFSSEKIM (105 aa)). Serine 470, serine 497, and serine 534 each carry phosphoserine.

This sequence belongs to the LU7TM family. TMEM87 subfamily.

It is found in the golgi apparatus membrane. May be involved in retrograde transport from endosomes to the trans-Golgi network (TGN). The protein is Transmembrane protein 87B of Mus musculus (Mouse).